Consider the following 237-residue polypeptide: Uridylate kinase (237 aa).

9-12 (KLSG) is a binding site for ATP. Residue G51 coordinates UMP. Positions 52 and 56 each coordinate ATP. Residues D71 and 132–139 (CGNPFFTT) each bind UMP. T159, Y165, and D168 together coordinate ATP.

Belongs to the UMP kinase family. Homohexamer.

It localises to the cytoplasm. It carries out the reaction UMP + ATP = UDP + ADP. It functions in the pathway pyrimidine metabolism; CTP biosynthesis via de novo pathway; UDP from UMP (UMPK route): step 1/1. With respect to regulation, inhibited by UTP. Functionally, catalyzes the reversible phosphorylation of UMP to UDP. This Prochlorococcus marinus (strain MIT 9303) protein is Uridylate kinase.